The following is a 731-amino-acid chain: MTPASANDLLIPEEDLNRLRHCHHHNPHGFYGWHATDDGSVIRTRQIGAEKVELVLGDTQIVMNPIGDDIFAIKLGNREAFDYRLRVTWPGQDPVVTADPYIFLPTLGEMDTYLISEGRHERLWDVLGANVKTYETTLGQVRGTAFAVWAPNAIGVAVIGGFNGWNASQHAMRSLGGSGIWELFIPNIGPGEVYKFAIQTREGHRRDKADPMARLAELPPATGSIVVESDYQWQDSEWMDKRAEIDTATTPMSVYEVHLGSWRWGRSYAELATELVDYVADLGYTHVEFMPVAEHPFGGSWGYQVSGYYAPTSRWGSPDELRKLIDAFHARGIGVIIDWVPAHFPKDDWALARFDGQALYEHPDWRRGEQKDWGTYVFNFGRSEVRNFLVANALYWLEEFHVDGLRVDAVASMLYLDYSREHGEWEPNVYGGRENLEAVQFLQEMNATVQRVHPGALTIAEESTSWPGVTAPTWDGGLGFSLKWNMGWMNDTLEYFSKDPIHRSFHHNELTFSLVYAFSERFVLPISHDEVVHGKGSLWNRMPGDTWNKAAGMRTLLAYMWAHPGKKLLFMGQEIGQRDEWSEAHELPWGVVEGWQGEYHEGISDLVRELNSTYKEVTALHQRDFSGEGFTWNKADDASNNILVFTRHGDDGSQALCVFNLSGTSQPEYQIGVSGGGSWRLVLNTDDEQYHGANNPLPETIEAEKIDRDGFPYTTTLHSPAMSAQFYVWEG.

Asp-408 acts as the Nucleophile in catalysis. Residue Glu-461 is the Proton donor of the active site.

It belongs to the glycosyl hydrolase 13 family. GlgB subfamily. As to quaternary structure, monomer.

It catalyses the reaction Transfers a segment of a (1-&gt;4)-alpha-D-glucan chain to a primary hydroxy group in a similar glucan chain.. The protein operates within glycan biosynthesis; glycogen biosynthesis. In terms of biological role, catalyzes the formation of the alpha-1,6-glucosidic linkages in glycogen by scission of a 1,4-alpha-linked oligosaccharide from growing alpha-1,4-glucan chains and the subsequent attachment of the oligosaccharide to the alpha-1,6 position. The polypeptide is 1,4-alpha-glucan branching enzyme GlgB (Corynebacterium efficiens (strain DSM 44549 / YS-314 / AJ 12310 / JCM 11189 / NBRC 100395)).